We begin with the raw amino-acid sequence, 589 residues long: Poly(3-hydroxyalkanoate) polymerase subunit PhaC (589 aa).

Residues methionine 1–proline 23 form a disordered region. The active site involves cysteine 319.

This sequence belongs to the PHA/PHB synthase family. Type I PhaC subfamily. In terms of assembly, monomer.

It localises to the cytoplasm. It catalyses the reaction (3R)-3-hydroxybutanoyl-CoA + [(3R)-hydroxybutanoate](n) = [(3R)-hydroxybutanoate](n+1) + CoA. It participates in biopolymer metabolism; poly-(R)-3-hydroxybutanoate biosynthesis. Its function is as follows. Polymerizes (R)-3-hydroxybutyryl-CoA to create polyhydroxybutyrate (PHB) which consists of thousands of hydroxybutyrate molecules linked end to end. PHB serves as an intracellular energy reserve material when cells grow under conditions of nutrient limitation. The chain is Poly(3-hydroxyalkanoate) polymerase subunit PhaC from Cupriavidus necator (strain ATCC 17699 / DSM 428 / KCTC 22496 / NCIMB 10442 / H16 / Stanier 337) (Ralstonia eutropha).